Consider the following 331-residue polypeptide: Ketol-acid reductoisomerase (NADP(+)) (331 aa).

The KARI N-terminal Rossmann domain occupies 2–182; that stretch reads ARMYYDEDAN…GGTRAGVLET (181 aa). NADP(+) is bound by residues 25-28, Ser-51, Ser-53, and 83-86; these read YGSQ and DEVQ. His-108 is a catalytic residue. An NADP(+)-binding site is contributed by Gly-134. The 146-residue stretch at 183-328 folds into the KARI C-terminal knotted domain; that stretch reads TFREETETDL…KDLRAMFSWL (146 aa). 4 residues coordinate Mg(2+): Asp-191, Glu-195, Glu-227, and Glu-231. Ser-252 serves as a coordination point for substrate.

Belongs to the ketol-acid reductoisomerase family. The cofactor is Mg(2+).

It carries out the reaction (2R)-2,3-dihydroxy-3-methylbutanoate + NADP(+) = (2S)-2-acetolactate + NADPH + H(+). It catalyses the reaction (2R,3R)-2,3-dihydroxy-3-methylpentanoate + NADP(+) = (S)-2-ethyl-2-hydroxy-3-oxobutanoate + NADPH + H(+). The protein operates within amino-acid biosynthesis; L-isoleucine biosynthesis; L-isoleucine from 2-oxobutanoate: step 2/4. Its pathway is amino-acid biosynthesis; L-valine biosynthesis; L-valine from pyruvate: step 2/4. Functionally, involved in the biosynthesis of branched-chain amino acids (BCAA). Catalyzes an alkyl-migration followed by a ketol-acid reduction of (S)-2-acetolactate (S2AL) to yield (R)-2,3-dihydroxy-isovalerate. In the isomerase reaction, S2AL is rearranged via a Mg-dependent methyl migration to produce 3-hydroxy-3-methyl-2-ketobutyrate (HMKB). In the reductase reaction, this 2-ketoacid undergoes a metal-dependent reduction by NADPH to yield (R)-2,3-dihydroxy-isovalerate. The sequence is that of Ketol-acid reductoisomerase (NADP(+)) from Nostoc punctiforme (strain ATCC 29133 / PCC 73102).